Reading from the N-terminus, the 245-residue chain is Small ribosomal subunit protein uS2 (245 aa).

The protein belongs to the universal ribosomal protein uS2 family.

This is Small ribosomal subunit protein uS2 from Pseudomonas putida (strain W619).